The sequence spans 179 residues: Inner membrane-spanning protein YciB (179 aa).

The next 5 helical transmembrane spans lie at 22-42, 50-70, 76-96, 121-141, and 149-169; these read IYAA…YSWV, MALI…FFHN, WKVT…QWVM, LAWA…AFWL, and FKVF…GIYI.

It belongs to the YciB family.

The protein localises to the cell inner membrane. Functionally, plays a role in cell envelope biogenesis, maintenance of cell envelope integrity and membrane homeostasis. The sequence is that of Inner membrane-spanning protein YciB from Klebsiella pneumoniae subsp. pneumoniae (strain ATCC 700721 / MGH 78578).